We begin with the raw amino-acid sequence, 543 residues long: Sensor histidine kinase DcuS (543 aa).

Topologically, residues 1–20 are cytoplasmic; it reads MRHSLPYRMLRKRPMKLSTT. Residues 21-41 form a helical membrane-spanning segment; the sequence is VILMVSAVLFSVLLVVHLIYF. At 42–181 the chain is on the periplasmic side; the sequence is SQISDMTRDG…VTQQINDSRW (140 aa). Residues 107 to 110, K121, 140 to 142, and R147 contribute to the (R)-malate site; these read RYSH and GFL. Residues 182 to 202 form a helical membrane-spanning segment; the sequence is SIIWSVLFGMLVGLIGTCILV. Topologically, residues 203-543 are cytoplasmic; it reads KVLKKILFGL…IPWDGERSNR (341 aa). Positions 212–323 constitute a PAS domain; sequence LEPYEISTLF…IIGAISTFRD (112 aa). A Histidine kinase domain is found at 346-538; it reads ERSHEFMNKL…QFFVQIPWDG (193 aa). H349 carries the post-translational modification Phosphohistidine; by autocatalysis.

Homodimer. Autophosphorylated. The phosphoryl group is rapidly transferred to DcuR.

The protein localises to the cell inner membrane. It carries out the reaction ATP + protein L-histidine = ADP + protein N-phospho-L-histidine.. Member of the two-component regulatory system DcuR/DcuS. Involved in the C4-dicarboxylate-stimulated regulation of the genes encoding the anaerobic fumarate respiratory system (frdABCD; nuoAN; dcuB; sdhCDAB; etc.). Weakly regulates the aerobic C4-dicarboxylate transporter dctA. Activates DcuR by phosphorylation. In Escherichia coli O157:H7, this protein is Sensor histidine kinase DcuS (dcuS).